Reading from the N-terminus, the 159-residue chain is Capsid protein (159 aa).

Ser-2 is modified (N-acetylserine; by host).

The protein belongs to the virgaviridae capsid protein family.

Its subcellular location is the virion. Capsid protein self-assembles to form rod-shaped virions about 18 nm in diameter with a central canal enclosing the viral genomic RNA. This chain is Capsid protein (CP), found in Tobacco mosaic virus (strain 06) (TMV-06).